A 175-amino-acid chain; its full sequence is Protein-export protein SecB (175 aa).

This sequence belongs to the SecB family. In terms of assembly, homotetramer, a dimer of dimers. One homotetramer interacts with 1 SecA dimer.

It is found in the cytoplasm. Its function is as follows. One of the proteins required for the normal export of preproteins out of the cell cytoplasm. It is a molecular chaperone that binds to a subset of precursor proteins, maintaining them in a translocation-competent state. It also specifically binds to its receptor SecA. The protein is Protein-export protein SecB of Anaplasma marginale (strain Florida).